A 235-amino-acid chain; its full sequence is Probable tetraspanin tspA (235 aa).

The Cytoplasmic portion of the chain corresponds to 1–18 (MVDTSNLLPQTPRLLKVP). Residues 19–39 (LIILNIILWILGLVLVIVGGI) traverse the membrane as a helical segment. Topologically, residues 40–68 (CVSFLSNFKDFTKASDAKSALSNLTTSIP) are extracellular. Asparagine 62 is a glycosylation site (N-linked (GlcNAc...) asparagine). A helical membrane pass occupies residues 69-89 (AGVLVIGILFVIFTVVGCFVA). Topologically, residues 90 to 93 (YKEK) are cytoplasmic. A helical membrane pass occupies residues 94–114 (LVGLVIYCAVMLILLVILIGV). Residues 115 to 200 (GGKAITLHND…FSSKIYAVGA (86 aa)) are Extracellular-facing. Residues asparagine 139, asparagine 143, and asparagine 160 are each glycosylated (N-linked (GlcNAc...) asparagine). Residues 201 to 221 (AGLAIGIIELVAILFSLFLII) traverse the membrane as a helical segment. Topologically, residues 222 to 235 (RICRSPRTRSYDQY) are cytoplasmic.

It belongs to the tetraspanin (TM4SF) family.

It is found in the membrane. This is Probable tetraspanin tspA (tspA) from Dictyostelium discoideum (Social amoeba).